The primary structure comprises 371 residues: Neuropeptide Y receptor type 6 (371 aa).

At 1 to 31 (MEVLTNQPTPNKTSGKSNNSAFFYFESCQPP) the chain is on the extracellular side. Residues Asn-11 and Asn-18 are each glycosylated (N-linked (GlcNAc...) asparagine). A helical membrane pass occupies residues 32-52 (FLAILLLLIAYTVILIMGIFG). Over 53 to 82 (NLSLIIIIFKKQREAQNVTNILIANLSLSD) the chain is Cytoplasmic. A helical transmembrane segment spans residues 83–103 (ILVCVMCIPFTVIYTLMDHWV). At 104–111 (FGNTMCKL) the chain is on the extracellular side. Cysteines 109 and 196 form a disulfide. The helical transmembrane segment at 112-132 (TSYVQSVSVSVSIFSLVLIAI) threads the bilayer. At 133 to 150 (ERYQLIVNPRGWKPRVAH) the chain is on the cytoplasmic side. A helical membrane pass occupies residues 151 to 171 (AYWGIILIWLISLTLSIPLFL). The Extracellular segment spans residues 172-206 (SYHLTNEPFHNLSLPTDIYTHQVACVEIWPSKLNQ). Asn-182 is a glycosylation site (N-linked (GlcNAc...) asparagine). A helical transmembrane segment spans residues 207-227 (LLFSTSLFMLQYFVPLGFILI). Residues 228-263 (CYLKIVLCLRKRTRQVDRRKENKSRLNENKRVNVML) are Cytoplasmic-facing. Residues 264–284 (ISIVVTFGACWLPLNIFNVIF) traverse the membrane as a helical segment. Residues 285–297 (DWYHEMLMSCHHD) are Extracellular-facing. The helical transmembrane segment at 298–318 (LVFVVCHLIAMVSTCINPLFY) threads the bilayer. Residues 319-371 (GFLNKNFQKDLMMLIHHCWCGEPQESYENIAMSTMHTDESKGSLKLAHIPTGI) are Cytoplasmic-facing. The S-palmitoyl cysteine moiety is linked to residue Cys-336.

It belongs to the G-protein coupled receptor 1 family. Kidney and discrete regions of the hypothalamus including the suprachiasmatic nucleus, anterior hypothalamus, bed nucleus stria terminalis, and the ventromedial nucleus.

The protein resides in the cell membrane. Its function is as follows. Receptor for neuropeptide Y and peptide YY. The rank order of affinity of this receptor for pancreatic polypeptides is NPY = PYY &gt;= NPY (2-36) = [Leu-31, Pro-34] NPY &gt; NPY (13-36) &gt; PP. The activity of this receptor is mediated by G proteins that inhibits adenylate cyclase activity. In Mus musculus (Mouse), this protein is Neuropeptide Y receptor type 6 (Npy6r).